The sequence spans 351 residues: Anthranilate phosphoribosyltransferase (351 aa).

Residues Gly85, 88–89, Ser93, 95–98, 113–121, and Thr125 each bind 5-phospho-alpha-D-ribose 1-diphosphate; these read GD, NIST, and KHGNRAASS. Gly85 contributes to the anthranilate binding site. A Mg(2+)-binding site is contributed by Ser97. Asn116 contacts anthranilate. Arg171 contacts anthranilate. Residues Asp229 and Glu230 each contribute to the Mg(2+) site.

This sequence belongs to the anthranilate phosphoribosyltransferase family. As to quaternary structure, homodimer. The cofactor is Mg(2+).

It catalyses the reaction N-(5-phospho-beta-D-ribosyl)anthranilate + diphosphate = 5-phospho-alpha-D-ribose 1-diphosphate + anthranilate. It functions in the pathway amino-acid biosynthesis; L-tryptophan biosynthesis; L-tryptophan from chorismate: step 2/5. In terms of biological role, catalyzes the transfer of the phosphoribosyl group of 5-phosphorylribose-1-pyrophosphate (PRPP) to anthranilate to yield N-(5'-phosphoribosyl)-anthranilate (PRA). This is Anthranilate phosphoribosyltransferase from Saccharopolyspora erythraea (strain ATCC 11635 / DSM 40517 / JCM 4748 / NBRC 13426 / NCIMB 8594 / NRRL 2338).